Reading from the N-terminus, the 479-residue chain is NADH-quinone oxidoreductase subunit N (479 aa).

14 helical membrane passes run 3 to 23, 40 to 60, 77 to 97, 102 to 122, 125 to 145, 159 to 179, 200 to 220, 234 to 254, 268 to 288, 299 to 319, 327 to 347, 373 to 393, 409 to 429, and 452 to 472; these read MLYGIMPEISLLLSALIFQLI, IGFAAILIAILVFHPSWFNGI, IIILIFYIFLTLIYSGYIKVA, HSEYIVLMQLGALGGLILVSA, FMVMYLGIEMQGIIGYILTTF, YFILGTVFSAIMLFGISLVYG, MAVLVAAILMILVGVLFKLSI, APLVVVALFSSLPKISVLALL, FFYIKTIIMVLACLSLIVGAF, FIAYSAILNLGYAVLALVANS, ISYFYIIIYAASMLGFIAIII, SILIAIQMFSLVGIPPFAGFI, ELIIMGIAAVVIGSYCYLNIV, and LVSIASTIIVISLMIICMLFG.

Belongs to the complex I subunit 2 family. NDH-1 is composed of 14 different subunits. Subunits NuoA, H, J, K, L, M, N constitute the membrane sector of the complex.

Its subcellular location is the cell inner membrane. It carries out the reaction a quinone + NADH + 5 H(+)(in) = a quinol + NAD(+) + 4 H(+)(out). Its function is as follows. NDH-1 shuttles electrons from NADH, via FMN and iron-sulfur (Fe-S) centers, to quinones in the respiratory chain. The immediate electron acceptor for the enzyme in this species is believed to be ubiquinone. Couples the redox reaction to proton translocation (for every two electrons transferred, four hydrogen ions are translocated across the cytoplasmic membrane), and thus conserves the redox energy in a proton gradient. The polypeptide is NADH-quinone oxidoreductase subunit N (Orientia tsutsugamushi (strain Ikeda) (Rickettsia tsutsugamushi)).